Consider the following 508-residue polypeptide: Photosystem II CP47 reaction center protein (508 aa).

The next 6 membrane-spanning stretches (helical) occupy residues Ser-21–Ser-36, Ile-101–Trp-115, Gly-140–Phe-156, Ile-203–Ser-218, Val-237–Val-252, and Ser-457–Arg-472.

It belongs to the PsbB/PsbC family. PsbB subfamily. As to quaternary structure, PSII is composed of 1 copy each of membrane proteins PsbA, PsbB, PsbC, PsbD, PsbE, PsbF, PsbH, PsbI, PsbJ, PsbK, PsbL, PsbM, PsbT, PsbX, PsbY, PsbZ, Psb30/Ycf12, at least 3 peripheral proteins of the oxygen-evolving complex and a large number of cofactors. It forms dimeric complexes. It depends on Binds multiple chlorophylls. PSII binds additional chlorophylls, carotenoids and specific lipids. as a cofactor.

The protein localises to the plastid. The protein resides in the chloroplast thylakoid membrane. In terms of biological role, one of the components of the core complex of photosystem II (PSII). It binds chlorophyll and helps catalyze the primary light-induced photochemical processes of PSII. PSII is a light-driven water:plastoquinone oxidoreductase, using light energy to abstract electrons from H(2)O, generating O(2) and a proton gradient subsequently used for ATP formation. The polypeptide is Photosystem II CP47 reaction center protein (Phaseolus vulgaris (Kidney bean)).